We begin with the raw amino-acid sequence, 648 residues long: 5-aminolevulinate synthase, mitochondrial (648 aa).

The transit peptide at 1–26 directs the protein to the mitochondrion; sequence MEALLQQSRAMCPFLKRSSPNTLRSL. The tract at residues 69–109 is disordered; that stretch reads KRFTSSAAGVPGAGAGTPKPTRGSPGKRALHSTGGNGANMS. Substrate contacts are provided by Arg170, Ser283, and Lys302. The pyridoxal 5'-phosphate site is built by Ser335, His363, and Thr409. Lys412 is a catalytic residue. Residue Lys412 is modified to N6-(pyridoxal phosphate)lysine. Residues Thr441 and Thr442 each contribute to the pyridoxal 5'-phosphate site. Position 527 (Thr527) interacts with substrate.

It belongs to the class-II pyridoxal-phosphate-dependent aminotransferase family. As to quaternary structure, homodimer. Requires pyridoxal 5'-phosphate as cofactor.

The protein resides in the mitochondrion matrix. It catalyses the reaction succinyl-CoA + glycine + H(+) = 5-aminolevulinate + CO2 + CoA. Its pathway is porphyrin-containing compound metabolism; protoporphyrin-IX biosynthesis; 5-aminolevulinate from glycine: step 1/1. Catalyzes the synthesis of 5-aminolevulinate (ALA) from succinyl-CoA and glycine, the first and rate-limiting step in heme biosynthesis. The sequence is that of 5-aminolevulinate synthase, mitochondrial (hemA) from Emericella nidulans (strain FGSC A4 / ATCC 38163 / CBS 112.46 / NRRL 194 / M139) (Aspergillus nidulans).